The chain runs to 539 residues: Phosphoenolpyruvate carboxykinase (ATP) (539 aa).

The substrate site is built by R64, Y206, and K212. ATP-binding positions include K212, H231, and 247–255 (GLSGTGKTT). K212 and H231 together coordinate Mn(2+). D268 is a Mn(2+) binding site. ATP contacts are provided by residues E296, R332, 448–449 (RI), and T454. Residue R332 participates in substrate binding.

Belongs to the phosphoenolpyruvate carboxykinase (ATP) family. As to quaternary structure, monomer. It depends on Mn(2+) as a cofactor.

The protein localises to the cytoplasm. The enzyme catalyses oxaloacetate + ATP = phosphoenolpyruvate + ADP + CO2. The protein operates within carbohydrate biosynthesis; gluconeogenesis. Its function is as follows. Involved in the gluconeogenesis. Catalyzes the conversion of oxaloacetate (OAA) to phosphoenolpyruvate (PEP) through direct phosphoryl transfer between the nucleoside triphosphate and OAA. The sequence is that of Phosphoenolpyruvate carboxykinase (ATP) from Salmonella choleraesuis (strain SC-B67).